The sequence spans 485 residues: Glutamate--tRNA ligase (485 aa).

Residues 11–21 carry the 'HIGH' region motif; the sequence is PSPTGYMHVGN. The Zn(2+) site is built by cysteine 108, cysteine 110, cysteine 135, and aspartate 137. Positions 252–256 match the 'KMSKS' region motif; that stretch reads KLSKR. ATP is bound at residue lysine 255.

This sequence belongs to the class-I aminoacyl-tRNA synthetase family. Glutamate--tRNA ligase type 1 subfamily. Monomer. It depends on Zn(2+) as a cofactor.

The protein resides in the cytoplasm. It carries out the reaction tRNA(Glu) + L-glutamate + ATP = L-glutamyl-tRNA(Glu) + AMP + diphosphate. Functionally, catalyzes the attachment of glutamate to tRNA(Glu) in a two-step reaction: glutamate is first activated by ATP to form Glu-AMP and then transferred to the acceptor end of tRNA(Glu). The protein is Glutamate--tRNA ligase of Clostridium botulinum (strain ATCC 19397 / Type A).